A 397-amino-acid chain; its full sequence is Subtilisin-like protease 3 (397 aa).

An N-terminal signal peptide occupies residues 1-19; that stretch reads MGCIKVISVFLAAVAAVDA. Residues 20–116 constitute a propeptide that is removed on maturation; it reads RAFFHNRGGN…VEHDRVVKLA (97 aa). The 82-residue stretch at 35–116 folds into the Inhibitor I9 domain; it reads SYIVVMKDGV…VEHDRVVKLA (82 aa). A Peptidase S8 domain is found at 126–397; the sequence is TWGLGRVSHK…NKLLYNGSGR (272 aa). Active-site charge relay system residues include Asp-158 and His-189. An N-linked (GlcNAc...) asparagine glycan is attached at Asn-250. Ser-344 serves as the catalytic Charge relay system. Asn-393 carries an N-linked (GlcNAc...) asparagine glycan.

This sequence belongs to the peptidase S8 family.

It is found in the secreted. Functionally, secreted subtilisin-like serine protease with keratinolytic activity that contributes to pathogenicity. This is Subtilisin-like protease 3 (SUB3) from Arthroderma otae (strain ATCC MYA-4605 / CBS 113480) (Microsporum canis).